The primary structure comprises 443 residues: L-seryl-tRNA(Sec) selenium transferase (443 aa).

At K285 the chain carries N6-(pyridoxal phosphate)lysine.

The protein belongs to the SelA family. It depends on pyridoxal 5'-phosphate as a cofactor.

The protein localises to the cytoplasm. The enzyme catalyses L-seryl-tRNA(Sec) + selenophosphate + H(+) = L-selenocysteinyl-tRNA(Sec) + phosphate. Its pathway is aminoacyl-tRNA biosynthesis; selenocysteinyl-tRNA(Sec) biosynthesis; selenocysteinyl-tRNA(Sec) from L-seryl-tRNA(Sec) (bacterial route): step 1/1. Converts seryl-tRNA(Sec) to selenocysteinyl-tRNA(Sec) required for selenoprotein biosynthesis. The chain is L-seryl-tRNA(Sec) selenium transferase from Campylobacter lari (strain RM2100 / D67 / ATCC BAA-1060).